Reading from the N-terminus, the 296-residue chain is NAD kinase (296 aa).

D72 acts as the Proton acceptor in catalysis. NAD(+) is bound by residues 72–73 (DG), 146–147 (ND), R157, K174, D176, 187–192 (TAYALS), and Q247.

This sequence belongs to the NAD kinase family. The cofactor is a divalent metal cation.

It localises to the cytoplasm. It carries out the reaction NAD(+) + ATP = ADP + NADP(+) + H(+). Involved in the regulation of the intracellular balance of NAD and NADP, and is a key enzyme in the biosynthesis of NADP. Catalyzes specifically the phosphorylation on 2'-hydroxyl of the adenosine moiety of NAD to yield NADP. The chain is NAD kinase from Pseudomonas syringae pv. tomato (strain ATCC BAA-871 / DC3000).